A 926-amino-acid polypeptide reads, in one-letter code: Translation initiation factor IF-2 (926 aa).

Disordered regions lie at residues 1–185 (MTDS…EEVE) and 200–299 (EDKA…RRRG). Composition is skewed to low complexity over residues 13–24 (TGKKTLTLKPTG) and 70–96 (APAT…AAPQ). Over residues 110 to 133 (TNQYSQQRHPGQQNRPQASSQPSR) the composition is skewed to polar residues. The span at 151-185 (MDARRRALAEAQVREVEDAKRRAEEEVRRQAEEVE) shows a compositional bias: basic and acidic residues. Low complexity predominate over residues 211–251 (APEPVAEPVAPVAETPRAADPAPRAPSPAGAKPAAGAPAPS). The tr-type G domain occupies 424–591 (SRPPVVTIMG…AVLLQAEILD (168 aa)). Positions 433–440 (GHVDHGKT) are G1. Residue 433–440 (GHVDHGKT) coordinates GTP. The interval 458–462 (GITQH) is G2. The G3 stretch occupies residues 479-482 (DTPG). Residues 479–483 (DTPGH) and 533–536 (NKID) contribute to the GTP site. Residues 533-536 (NKID) form a G4 region. The segment at 569-571 (SAK) is G5.

It belongs to the TRAFAC class translation factor GTPase superfamily. Classic translation factor GTPase family. IF-2 subfamily.

Its subcellular location is the cytoplasm. One of the essential components for the initiation of protein synthesis. Protects formylmethionyl-tRNA from spontaneous hydrolysis and promotes its binding to the 30S ribosomal subunits. Also involved in the hydrolysis of GTP during the formation of the 70S ribosomal complex. This Allorhizobium ampelinum (strain ATCC BAA-846 / DSM 112012 / S4) (Agrobacterium vitis (strain S4)) protein is Translation initiation factor IF-2.